A 592-amino-acid polypeptide reads, in one-letter code: Inactive heparanase-2 (592 aa).

The first 38 residues, 1-38 (MRVLCAFPEAMASSSSRPPSCLALVALFLALLLHLSLS), serve as a signal peptide directing secretion. Residues N254 and N392 are each glycosylated (N-linked (GlcNAc...) asparagine).

Belongs to the glycosyl hydrolase 79 family. Interacts with HPSE. Interacts with SDC1 (via glycan chains).

It localises to the secreted. The protein localises to the extracellular space. Its subcellular location is the extracellular matrix. Binds heparin and heparan sulfate with high affinity, but lacks heparanase activity. Inhibits HPSE, possibly by competing for its substrates (in vitro). The sequence is that of Inactive heparanase-2 (Hpse2) from Mus musculus (Mouse).